Consider the following 511-residue polypeptide: MLHRINPVRFSMQSCQRYFSKLVSPLEQHKSNTFTNRVRIPIEAGQPLHETRPFLIKSGELTPGISALEYYERRIRLAETLPPKSCVILAGNDIQFASGAVFYPFQQENDLFYLSGWNEPNSVMILEKPTDSLSDTIFHMLVPPKDAFAEKWEGFRSGVYGVQEIFNADESASINDLSKYLPKIINRNDFIYFDMLSTSNPSSSNFKHIKSLLDGSGNSNRSLNSIANKTIKPISKRIAEFRKIKSPQELRIMRRAGQISGRSFNQAFAKRFRNERTLDSFLHYKFISGGCDKDAYIPVVATGSNSLCIHYTRNDDVMFDDEMVLVDAAGSLGGYCADISRTWPNSGKFTDAQRDLYEAVLNVQRDCIKLCKASNNYSLHDIHEKSITLMKQELKNLGIDKVSGWNVEKLYPHYIGHNLGLDVHDVPKVSRYEPLKVGQVITIEPGLYIPNEESFPSYFRNVGIRIEDDIAIGEDTYTNLTVEAVKEIDDLENVMQNGLSTKFEEDQVAPL.

Mn(2+) is bound by residues Asp327, Asp338, His417, Glu444, and Glu467.

This sequence belongs to the peptidase M24B family. Mn(2+) is required as a cofactor.

The protein resides in the nucleus. Its subcellular location is the mitochondrion inner membrane. The enzyme catalyses The enzyme cleaves the 36-Pro-Pro-37 bond of cysteine desulfurase (EC 2.8.1.7) removing three amino acid residues (Tyr-Ser-Pro) from the N-terminus after cleavage by mitochondrial processing peptidase.. In terms of biological role, aminopeptidase which cleaves preprotein intermediates that carry destabilizing N-ter amino acid residues after the mitochondrial processing peptidase (MPP) cleavage site and is thus critical for stabilization of the mitochondrial proteome. The polypeptide is Intermediate cleaving peptidase 55 (ICP55) (Saccharomyces cerevisiae (strain ATCC 204508 / S288c) (Baker's yeast)).